Here is a 115-residue protein sequence, read N- to C-terminus: MSDTILKCTTRHVRIFTAVVENNDLILDNGHLTLDIDPDNEFSWSDQSIKKVQDYFRELVELQADNELSDYTLRKIGSLLEDFIRKLLKDGELSYNPNSRVMNYSMGLPRTQELL.

This sequence belongs to the complex I NdhM subunit family. As to quaternary structure, NDH-1 can be composed of about 15 different subunits; different subcomplexes with different compositions have been identified which probably have different functions.

The protein resides in the cellular thylakoid membrane. The enzyme catalyses a plastoquinone + NADH + (n+1) H(+)(in) = a plastoquinol + NAD(+) + n H(+)(out). It catalyses the reaction a plastoquinone + NADPH + (n+1) H(+)(in) = a plastoquinol + NADP(+) + n H(+)(out). Functionally, NDH-1 shuttles electrons from an unknown electron donor, via FMN and iron-sulfur (Fe-S) centers, to quinones in the respiratory and/or the photosynthetic chain. The immediate electron acceptor for the enzyme in this species is believed to be plastoquinone. Couples the redox reaction to proton translocation, and thus conserves the redox energy in a proton gradient. Cyanobacterial NDH-1 also plays a role in inorganic carbon-concentration. This Prochlorococcus marinus (strain NATL1A) protein is NAD(P)H-quinone oxidoreductase subunit M.